The following is a 178-amino-acid chain: CDP-archaeol synthase (178 aa).

5 helical membrane passes run leucine 3–valine 23, phenylalanine 56–tyrosine 76, isoleucine 91–isoleucine 111, alanine 123–tyrosine 143, and leucine 149–tyrosine 169.

Belongs to the CDP-archaeol synthase family. The cofactor is Mg(2+).

It is found in the cell membrane. It carries out the reaction 2,3-bis-O-(geranylgeranyl)-sn-glycerol 1-phosphate + CTP + H(+) = CDP-2,3-bis-O-(geranylgeranyl)-sn-glycerol + diphosphate. It participates in membrane lipid metabolism; glycerophospholipid metabolism. Catalyzes the formation of CDP-2,3-bis-(O-geranylgeranyl)-sn-glycerol (CDP-archaeol) from 2,3-bis-(O-geranylgeranyl)-sn-glycerol 1-phosphate (DGGGP) and CTP. This reaction is the third ether-bond-formation step in the biosynthesis of archaeal membrane lipids. The sequence is that of CDP-archaeol synthase from Methanococcus maripaludis (strain C7 / ATCC BAA-1331).